A 1795-amino-acid polypeptide reads, in one-letter code: Type III effector AvrE (1795 aa).

Polar residues predominate over residues 1-18 (MQSPSIHRNTGSIIQPTV). A disordered region spans residues 1-227 (MQSPSIHRNT…PPREPMLWRS (227 aa)). Positions 60–75 (KSKAPQQKAATPPTAK) are enriched in low complexity. Composition is skewed to polar residues over residues 97 to 109 (GFSN…THSA) and 117 to 127 (HPNQASSSGAQ). The segment covering 129–154 (HEIHPEAAPRKNLRVRFDLPQDRLER) has biased composition (basic and acidic residues). A compositionally biased stretch (polar residues) spans 174–191 (ATRQFRSPDSHLQGSDGT). A compositionally biased stretch (low complexity) spans 203–215 (PSSSGSKIGDSDG). Short sequence motifs (wxxxE) lie at residues 393 to 397 (WKIPE) and 829 to 833 (WQRFE). Positions 1461–1488 (QIGGSHTAPTGTPASAPGPTPASQTAAN) are disordered. A compositionally biased stretch (low complexity) spans 1467 to 1487 (TAPTGTPASAPGPTPASQTAA). Residues 1787–1790 (KKEG) carry the ERMRS motif.

It belongs to the AvrE family. In planta interaction assays, interacts with the A.thaliana protein phosphatase 2A (PP2A) via direct interaction/association with specific B' regulatory subunits.

Its subcellular location is the secreted. The protein resides in the host cell. It is found in the host cell membrane. With respect to regulation, polyamidoamine dendrimers inhibit channel and virulence activities. Major virulence factor that may function as a water- and solute-permeable channel dedicated to creating osmotic/water potential perturbation and a water- and nutrient-rich apoplast in which bacteria multiply within the infected plant tissues. Expression in Xenopus oocytes results in inward and outward currents, permeability to water and osmolarity-dependent oocyte swelling and bursting. Functionally, elicits cell death in host tomato leaves and in non-host Nicotiana tabacum leaves. Acts within plant cells and promotes lesion formation. The combined action of AvrE and HopM1 is particularly important in promoting bacterial growth in plants. Contributes to the down-regulation of a specific subset of A.thaliana genes during infection, including NHL13, which is required for antibacterial immunity. The sequence is that of Type III effector AvrE from Pseudomonas syringae pv. tomato (strain ATCC BAA-871 / DC3000).